The primary structure comprises 581 residues: MDEELPDGVVFKDHSFSSDLLRQLNGLRQSKILTDVSICSGAWEVPCHRSVLASSSPYFKAMFCSHFRESREAKVQMKGISSTTLEQVITYVYTGEVHISAANVLPLMEAAAMLQYPRVFEACSSYLQSQLAPSNCLGLVRLAEILSCDSLKKKAKEVALTYFPEVAASADLKELCAMELRDYLGDDRLCGEEEKVFEALMAWVKHDLQARWRHMQELLQQVRLQYIHPAFFHHFIANDALLQSSPACQAILEMARKQIFSLYGPSAQDCKLLWRMPPRSSYQDFLLLLGGRKDNQQTTRDVLLYSGQTGQWQSLAKLPIRLYKASAVTLHRSVYVLGGMTVSEGKSLISCGVYIFSLKLNQWRVGEPMLAARYSHRSTTHRNFIFSIGGTGEGQELLASMERYDSIRDVWESMAGMPVAVLHPAVAVKDQRLYLFGGEDIMQNPVRLIQVYHISRNTWYKMETRMIKNVCAPAVVLGEQIVIVGGYTRRILAYDPQSNKFVKCADMKDRRMHHGATVMGNKLYVTGGRRLTTDCNIEDSASFDCYDPETDTWTSQGQLPHKLFDHACLTLQCIPHMTSLS.

Residues 34 to 101 (TDVSICSGAW…VYTGEVHISA (68 aa)) form the BTB domain. One can recognise a BACK domain in the interval 136 to 237 (CLGLVRLAEI…HPAFFHHFIA (102 aa)). Kelch repeat units follow at residues 285 to 332 (FLLL…TLHR), 334 to 383 (VYVL…THRN), 384 to 431 (FIFS…VKDQ), 433 to 479 (LYLF…VLGE), 480 to 521 (QIVI…VMGN), and 523 to 573 (LYVT…TLQC).

In Mus musculus (Mouse), this protein is Kelch-like protein 38 (Klhl38).